A 186-amino-acid polypeptide reads, in one-letter code: Adenylate kinase (186 aa).

Residue 10 to 15 (GVGKGT) participates in ATP binding. Residues 30–59 (STGDIFRYNIKNKTELGLEAMSYTDKGELV) are NMP. AMP-binding positions include threonine 31, arginine 36, 57–59 (ELV), 85–88 (GYPR), and glutamine 92. Residues 126-136 (KRAAEQGRADD) are LID. Arginine 127 contacts ATP. Residues arginine 133 and arginine 144 each coordinate AMP. Glycine 172 serves as a coordination point for ATP.

Belongs to the adenylate kinase family. As to quaternary structure, monomer.

Its subcellular location is the cytoplasm. It carries out the reaction AMP + ATP = 2 ADP. It participates in purine metabolism; AMP biosynthesis via salvage pathway; AMP from ADP: step 1/1. Its function is as follows. Catalyzes the reversible transfer of the terminal phosphate group between ATP and AMP. Plays an important role in cellular energy homeostasis and in adenine nucleotide metabolism. The chain is Adenylate kinase from Bifidobacterium longum (strain NCC 2705).